The primary structure comprises 188 residues: dTTP/UTP pyrophosphatase (188 aa).

Asp70 acts as the Proton acceptor in catalysis.

The protein belongs to the Maf family. YhdE subfamily. The cofactor is a divalent metal cation.

It is found in the cytoplasm. It catalyses the reaction dTTP + H2O = dTMP + diphosphate + H(+). It carries out the reaction UTP + H2O = UMP + diphosphate + H(+). Nucleoside triphosphate pyrophosphatase that hydrolyzes dTTP and UTP. May have a dual role in cell division arrest and in preventing the incorporation of modified nucleotides into cellular nucleic acids. The polypeptide is dTTP/UTP pyrophosphatase (Clostridium botulinum (strain Eklund 17B / Type B)).